The following is a 285-amino-acid chain: Probable enoyl-CoA hydratase echA12 (285 aa).

This sequence belongs to the enoyl-CoA hydratase/isomerase family.

It catalyses the reaction a (3S)-3-hydroxyacyl-CoA = a (2E)-enoyl-CoA + H2O. The enzyme catalyses a 4-saturated-(3S)-3-hydroxyacyl-CoA = a (3E)-enoyl-CoA + H2O. Its function is as follows. Could possibly oxidize fatty acids using specific components. In Mycobacterium tuberculosis (strain CDC 1551 / Oshkosh), this protein is Probable enoyl-CoA hydratase echA12 (echA12).